A 359-amino-acid chain; its full sequence is MFPTGWRPKLSESIAASRMLWQPMAAVAVVQIGLLWFSPPVWGQDMVSPPPPIADEPLTVNTGIYLIECYSLDDKAETFKVNAFLSLSWKDRRLAFDPVRSGVRVKTYEPEAIWIPEIRFVNVENARDADVVDISVSPDGTVQYLERFSARVLSPLDFRRYPFDSQTLHIYLIVRSVDTRNIVLAVDLEKVGKNDDVFLTGWDIESFTAVVKPANFALEDRLESKLDYQLRISRQYFSYIPNIILPMLFILFISWTAFWSTSYEANVTLVVSTLIAHIAFNILVETNLPKTPYMTYTGAIIFMIYLFYFVAVIEVTVQHYLKVESQPARAASITRASRIAFPVVFLLANIILAFLFFGF.

Positions 1–43 (MFPTGWRPKLSESIAASRMLWQPMAAVAVVQIGLLWFSPPVWG) are cleaved as a signal peptide. The Periplasmic segment spans residues 44–235 (QDMVSPPPPI…LDYQLRISRQ (192 aa)). Residues 236–258 (YFSYIPNIILPMLFILFISWTAF) form a helical membrane-spanning segment. The Cytoplasmic portion of the chain corresponds to 259 to 261 (WST). The helical transmembrane segment at 262-286 (SYEANVTLVVSTLIAHIAFNILVET) threads the bilayer. Topologically, residues 287–294 (NLPKTPYM) are periplasmic. Residues 295-323 (TYTGAIIFMIYLFYFVAVIEVTVQHYLKV) traverse the membrane as a helical segment. At 324–326 (ESQ) the chain is on the cytoplasmic side. Residues 327-359 (PARAASITRASRIAFPVVFLLANIILAFLFFGF) form a helical membrane-spanning segment.

This sequence belongs to the ligand-gated ion channel (TC 1.A.9) family. In terms of assembly, homopentamer.

Its subcellular location is the cell inner membrane. Its activity is regulated as follows. Tetraethylammonium (TEA) and tetrabutylammonium (TBA) inhibit the proton-activated currents in a dose- and voltage-dependent manner in vitro, whereas the blocker of acid sensing ion channels, amiloride, has no effect. Channel current of GLIC can be inhibited by inhaled and intravenous general anesthetics at and below concentrations used clinically. Ion conduction is also inhibited by lidocaine and by divalent transition metal ions such as cadmium ions. Its function is as follows. Cationic channel with similar permeabilities for Na(+) and K(+), that is activated by an increase of the proton concentration on the extracellular side. Displays no permeability for chloride ions. Shows slow kinetics of activation, no desensitization and a single channel conductance of 8 pS. Might contribute to adaptation to external pH change. The sequence is that of Proton-gated ion channel (glvI) from Gloeobacter violaceus (strain ATCC 29082 / PCC 7421).